The chain runs to 390 residues: MNALHFGAGNIGRGFIGPLLLKSGFNLTFVDNNQAIVDAINRHQKYDITVVGNNFSYITTVKKVKAIYINDPNIYFKIAKINVITISVGVHAINSLVVFFEKLIRYKIETNDFVFLTIIACENVFRCASKLKENIKILLPGIYHKYLDKNISFVDSVVDKIVCPNDKNNSDDINLSVKVEKFSEWIVDCTQFKHDRPNIIGMIYSNHLDAFFERKLFTLNTGHAIAAYLGLLIGYKNIYQAILDPLIFNIVYGAMKESGMVLIRKYNFFTDSEHKNYILKILSRFKNIYLTDSLKRVGRNPLQKLKKDDRLISPLIDTIKYNLPNANLMKGIAAALCYIDEKDIEAKKLRNMIINKGIKYVLSKISSLDSSLLIISEISIYFNIFMKVNI.

3 to 14 (ALHFGAGNIGRG) serves as a coordination point for NAD(+).

It belongs to the mannitol dehydrogenase family.

It carries out the reaction D-mannitol 1-phosphate + NAD(+) = beta-D-fructose 6-phosphate + NADH + H(+). The sequence is that of Mannitol-1-phosphate 5-dehydrogenase from Buchnera aphidicola subsp. Baizongia pistaciae (strain Bp).